The chain runs to 90 residues: Aminoacyl carrier protein 1 (90 aa).

Residues 6–84 enclose the Carrier domain; the sequence is TDVRNRIIKL…TLERMVMTQL (79 aa). S42 carries the post-translational modification O-(pantetheine 4'-phosphoryl)serine.

Post-translationally, 4'-phosphopantetheine is transferred from CoA to a specific serine of the apo-form of this carrier protein.

Functionally, aminoacyl carrier protein. Can be charged with L-glycine via the formation of a thioester bond between the amino acid and the 4'-phosphopantetheinyl prosthetic group, catalyzed by the bll0957 ligase. In Bradyrhizobium diazoefficiens (strain JCM 10833 / BCRC 13528 / IAM 13628 / NBRC 14792 / USDA 110), this protein is Aminoacyl carrier protein 1.